A 243-amino-acid chain; its full sequence is Adenosylcobinamide-GDP ribazoletransferase (243 aa).

6 consecutive transmembrane segments (helical) span residues 33-53, 59-79, 105-125, 127-147, 172-192, and 223-243; these read FLPV…LLAP, IIIV…HIDG, IGAF…TLAY, TENM…VFAA, VISI…GAII, and TIEI…SIII.

The protein belongs to the CobS family. Requires Mg(2+) as cofactor.

It is found in the cell membrane. The catalysed reaction is alpha-ribazole + adenosylcob(III)inamide-GDP = adenosylcob(III)alamin + GMP + H(+). It catalyses the reaction alpha-ribazole 5'-phosphate + adenosylcob(III)inamide-GDP = adenosylcob(III)alamin 5'-phosphate + GMP + H(+). Its pathway is cofactor biosynthesis; adenosylcobalamin biosynthesis; adenosylcobalamin from cob(II)yrinate a,c-diamide: step 7/7. Joins adenosylcobinamide-GDP and alpha-ribazole to generate adenosylcobalamin (Ado-cobalamin). Also synthesizes adenosylcobalamin 5'-phosphate from adenosylcobinamide-GDP and alpha-ribazole 5'-phosphate. This chain is Adenosylcobinamide-GDP ribazoletransferase, found in Alkaliphilus oremlandii (strain OhILAs) (Clostridium oremlandii (strain OhILAs)).